Consider the following 61-residue polypeptide: Large ribosomal subunit protein uL30 (61 aa).

Belongs to the universal ribosomal protein uL30 family. Part of the 50S ribosomal subunit.

The polypeptide is Large ribosomal subunit protein uL30 (Corynebacterium glutamicum (strain ATCC 13032 / DSM 20300 / JCM 1318 / BCRC 11384 / CCUG 27702 / LMG 3730 / NBRC 12168 / NCIMB 10025 / NRRL B-2784 / 534)).